Consider the following 294-residue polypeptide: Picrinine-N-methytransferase TMT2 (294 aa).

Positions 75 to 84 are SAM motif I; the sequence is LLDVGCGLGG. The short motif at 137–143 is the Vacuolar targeting signal element; sequence DGEFDVV. The interval 138–146 is SAM motif II; it reads GEFDVVFTL. Positions 165 to 174 are SAM motif III; it reads VGSPGAAIVV.

Belongs to the class I-like SAM-binding methyltransferase superfamily. gTMT family. As to quaternary structure, homodimer.

The protein localises to the vacuole membrane. It carries out the reaction picrinine + S-adenosyl-L-methionine = ervincine + S-adenosyl-L-homocysteine + H(+). Its pathway is alkaloid biosynthesis; vindoline biosynthesis. Its function is as follows. S-adenosyl-L-methionine-dependent N-methyltransferase involved in the biosynthesis of biologically active monoterpenoid indole alkaloids (MIAs) natural products including vindoline. Catalyzes the conversion of picrinine to N-methylpicrinine (ervincine). This is Picrinine-N-methytransferase TMT2 from Catharanthus roseus (Madagascar periwinkle).